The chain runs to 433 residues: Glutamate-rich protein 2 (433 aa).

Disordered regions lie at residues 56 to 86 (VPAAGTAPAPPPPRALRPAPGPPRSAPLAPP), 113 to 161 (DSAS…KHPQ), 189 to 273 (SRQN…SIET), 308 to 344 (CLEDIEENLSDSTDGDGEEDSNNEDDEGPAKKETRAP), and 394 to 433 (EKAQEEEEEEESDEDSSSESEVDSSEDGSEDSSDECEDGS). The span at 63 to 85 (PAPPPPRALRPAPGPPRSAPLAP) shows a compositional bias: pro residues. Residues 114–127 (SASQARGSEPSSSA) show a composition bias toward polar residues. Basic and acidic residues-rich tracts occupy residues 199–214 (DPKEKLMSGSNKEKPQ) and 244–258 (ARKETSSKKIEDKVS). Polar residues predominate over residues 259-273 (LKSSENRPSSRSIET). Composition is skewed to acidic residues over residues 308-334 (CLEDIEENLSDSTDGDGEEDSNNEDDE) and 397-433 (QEEEEEEESDEDSSSESEVDSSEDGSEDSSDECEDGS).

This chain is Glutamate-rich protein 2 (Erich2), found in Rattus norvegicus (Rat).